A 129-amino-acid chain; its full sequence is Glycine cleavage system H protein (129 aa).

The Lipoyl-binding domain maps to 24 to 106; that stretch reads SYTVGISEHA…FGDGWFFRVM (83 aa). At Lys65 the chain carries N6-lipoyllysine.

Belongs to the GcvH family. The glycine cleavage system is composed of four proteins: P, T, L and H. The cofactor is (R)-lipoate.

Functionally, the glycine cleavage system catalyzes the degradation of glycine. The H protein shuttles the methylamine group of glycine from the P protein to the T protein. This Shewanella sediminis (strain HAW-EB3) protein is Glycine cleavage system H protein.